Reading from the N-terminus, the 118-residue chain is Superoxide-generating NADPH oxidase light chain subunit (118 aa).

Transmembrane regions (helical) follow at residues 9 to 29 (WAAM…IMGI), 36 to 56 (IAIY…PLSF), 62 to 82 (AIFH…VLCY), and 83 to 103 (FLVP…VFLI).

It belongs to the p22phox family. In terms of assembly, composed of a heavy chain and a light chain.

The protein resides in the cell membrane. Its function is as follows. Critical component of the membrane-bound oxidase of phagocytes that generates superoxide. The polypeptide is Superoxide-generating NADPH oxidase light chain subunit (cybA) (Dictyostelium discoideum (Social amoeba)).